A 534-amino-acid polypeptide reads, in one-letter code: Probable protein kinase UbiB (534 aa).

Residues 23-43 (DLLFDLPLPWFLLALRFALPW) form a helical membrane-spanning segment. Residues 125-492 (RFDIEPLASA…WHKRKDDWFL (368 aa)) form the Protein kinase domain. Residues 131–139 (LASASVAQV) and lysine 153 each bind ATP. The active-site Proton acceptor is aspartate 288. Helical transmembrane passes span 490 to 510 (WFLR…AAGG) and 512 to 532 (LHEL…YLIV).

It belongs to the ABC1 family. UbiB subfamily.

The protein resides in the cell inner membrane. It functions in the pathway cofactor biosynthesis; ubiquinone biosynthesis [regulation]. Its function is as follows. Is probably a protein kinase regulator of UbiI activity which is involved in aerobic coenzyme Q (ubiquinone) biosynthesis. The chain is Probable protein kinase UbiB from Pseudomonas fluorescens (strain ATCC BAA-477 / NRRL B-23932 / Pf-5).